Consider the following 236-residue polypeptide: LexA repressor (236 aa).

The H-T-H motif DNA-binding region spans 26 to 46 (FDEMKEALDLRSKSGIHRLIT). Residues Ser-157 and Lys-195 each act as for autocatalytic cleavage activity in the active site.

This sequence belongs to the peptidase S24 family. As to quaternary structure, homodimer.

It catalyses the reaction Hydrolysis of Ala-|-Gly bond in repressor LexA.. Represses a number of genes involved in the response to DNA damage (SOS response), including recA and lexA. In the presence of single-stranded DNA, RecA interacts with LexA causing an autocatalytic cleavage which disrupts the DNA-binding part of LexA, leading to derepression of the SOS regulon and eventually DNA repair. The protein is LexA repressor of Azorhizobium caulinodans (strain ATCC 43989 / DSM 5975 / JCM 20966 / LMG 6465 / NBRC 14845 / NCIMB 13405 / ORS 571).